The chain runs to 699 residues: Elongation factor G (699 aa).

One can recognise a tr-type G domain in the interval 8 to 283; it reads EHIRNIGICA…AVVDFLPSPI (276 aa). Residues 17 to 24, 81 to 85, and 135 to 138 contribute to the GTP site; these read AHIDAGKT, DTPGH, and NKMD.

It belongs to the TRAFAC class translation factor GTPase superfamily. Classic translation factor GTPase family. EF-G/EF-2 subfamily.

The protein localises to the cytoplasm. Its function is as follows. Catalyzes the GTP-dependent ribosomal translocation step during translation elongation. During this step, the ribosome changes from the pre-translocational (PRE) to the post-translocational (POST) state as the newly formed A-site-bound peptidyl-tRNA and P-site-bound deacylated tRNA move to the P and E sites, respectively. Catalyzes the coordinated movement of the two tRNA molecules, the mRNA and conformational changes in the ribosome. The sequence is that of Elongation factor G from Rickettsia africae (strain ESF-5).